Consider the following 227-residue polypeptide: MKTVLVDWNLIPYAEAWQRQTEWFDTLVRAKAQGEAYENRIIMCEHPHVYTLGRSGKENNMLLNDDQLKAIQATLFHIDRGGDITYHGPGQLVCYPILNLEEFHLGLKEYVHLLEEAVIRVCASYGIEAGRLEKATGVWLEGSTPRARKICAIGVRSSHYVTMHGLALNVNTDLRYFSYIHPCGFIDKGVTSLRQELKHEVPMDEVKQRLECELGRLLNEKKQQIAQ.

Positions 35-222 (EAYENRIIMC…ELGRLLNEKK (188 aa)) constitute a BPL/LPL catalytic domain. Residues 80-87 (RGGDITYH), 152-154 (AIG), and 165-167 (GLA) each bind substrate. The Acyl-thioester intermediate role is filled by C183.

Belongs to the LipB family.

It is found in the cytoplasm. The enzyme catalyses octanoyl-[ACP] + L-lysyl-[protein] = N(6)-octanoyl-L-lysyl-[protein] + holo-[ACP] + H(+). It participates in protein modification; protein lipoylation via endogenous pathway; protein N(6)-(lipoyl)lysine from octanoyl-[acyl-carrier-protein]: step 1/2. Functionally, catalyzes the transfer of endogenously produced octanoic acid from octanoyl-acyl-carrier-protein onto the lipoyl domains of lipoate-dependent enzymes. Lipoyl-ACP can also act as a substrate although octanoyl-ACP is likely to be the physiological substrate. The protein is Octanoyltransferase of Bacteroides thetaiotaomicron (strain ATCC 29148 / DSM 2079 / JCM 5827 / CCUG 10774 / NCTC 10582 / VPI-5482 / E50).